Consider the following 91-residue polypeptide: Small ribosomal subunit protein uS19 (91 aa).

It belongs to the universal ribosomal protein uS19 family.

Functionally, protein S19 forms a complex with S13 that binds strongly to the 16S ribosomal RNA. The sequence is that of Small ribosomal subunit protein uS19 from Alcanivorax borkumensis (strain ATCC 700651 / DSM 11573 / NCIMB 13689 / SK2).